Reading from the N-terminus, the 1240-residue chain is DNA polymerase catalytic subunit (1240 aa).

Low complexity predominate over residues 1 to 26 (MFCAAGGPASPGGKSAARAASGFFAP). Disordered stretches follow at residues 1 to 65 (MFCA…PAQR), 646 to 695 (GLDK…RETG), and 1103 to 1139 (AAAPGDEPAPPAALPSPAKRPRETPSHADPPGGASKP). The span at 44 to 56 (NFYNPHLAQTGTQ) shows a compositional bias: polar residues. A compositionally biased stretch (acidic residues) spans 669 to 688 (NGDEDKDDDEDGDEDGDERE).

The protein belongs to the DNA polymerase type-B family. Forms a complex with the ssDNA-binding protein UL29, the DNA polymerase processivity factor, and the alkaline exonuclease. Interacts with the putative helicase-primase complex subunit UL8; this interaction may coordinate leading and lagging strand DNA synthesis at the replication fork.

It localises to the host nucleus. The catalysed reaction is DNA(n) + a 2'-deoxyribonucleoside 5'-triphosphate = DNA(n+1) + diphosphate. It catalyses the reaction Endonucleolytic cleavage to 5'-phosphomonoester.. Functionally, replicates viral genomic DNA. The replication complex is composed of six viral proteins: the DNA polymerase, processivity factor, primase, primase-associated factor, helicase, and ssDNA-binding protein. Additionally, the polymerase contains an intrinsic ribonuclease H (RNase H) activity that specifically degrades RNA/DNA heteroduplexes or duplex DNA substrates in the 5' to 3' direction. Therefore, it can catalyze the excision of the RNA primers that initiate the synthesis of Okazaki fragments at a replication fork during viral DNA replication. This chain is DNA polymerase catalytic subunit, found in Human herpesvirus 2 (strain 186) (HHV-2).